The primary structure comprises 211 residues: Molybdenum cofactor guanylyltransferase (211 aa).

GTP contacts are provided by residues 12–14 (LAG), Lys25, Asn55, Asp73, and Asp103. Asp103 is a binding site for Mg(2+).

Belongs to the MobA family. In terms of assembly, monomer. Mg(2+) is required as a cofactor.

Its subcellular location is the cytoplasm. It catalyses the reaction Mo-molybdopterin + GTP + H(+) = Mo-molybdopterin guanine dinucleotide + diphosphate. Its function is as follows. Transfers a GMP moiety from GTP to Mo-molybdopterin (Mo-MPT) cofactor (Moco or molybdenum cofactor) to form Mo-molybdopterin guanine dinucleotide (Mo-MGD) cofactor. This is Molybdenum cofactor guanylyltransferase from Albidiferax ferrireducens (strain ATCC BAA-621 / DSM 15236 / T118) (Rhodoferax ferrireducens).